The following is a 360-amino-acid chain: Aminomethyltransferase (360 aa).

This sequence belongs to the GcvT family. As to quaternary structure, the glycine cleavage system is composed of four proteins: P, T, L and H.

It carries out the reaction N(6)-[(R)-S(8)-aminomethyldihydrolipoyl]-L-lysyl-[protein] + (6S)-5,6,7,8-tetrahydrofolate = N(6)-[(R)-dihydrolipoyl]-L-lysyl-[protein] + (6R)-5,10-methylene-5,6,7,8-tetrahydrofolate + NH4(+). The glycine cleavage system catalyzes the degradation of glycine. The sequence is that of Aminomethyltransferase from Exiguobacterium sibiricum (strain DSM 17290 / CCUG 55495 / CIP 109462 / JCM 13490 / 255-15).